We begin with the raw amino-acid sequence, 292 residues long: MFARLVPRLQPQLLSKRVLTARYPMLTTTPIYHQTPMQIIKRNYVIVHRERKKEPVIRYLFYMLVASWVAIYFVANRVDKKKPPQQSFTEREFQSYEEETGLKRRNKLISHTMNSKYKFYVIPYVHDEEELKKVANLLQHKDENATVKIIDPAQLIEEQKKDEGMKYHYLLEDLDEQGRPYPPGLITAVIKQEIYKILNTREGTFDTNFIIKNYPQTTNEAIKFENDISDIQKCLILHYDMLNELPKNKTDEEQRAIKNVDGYFDSVGKSKTLVEKFDPMDKEFEEIMLEDI.

Residues 1-26 (MFARLVPRLQPQLLSKRVLTARYPML) constitute a mitochondrion transit peptide. Residues 56–75 (VIRYLFYMLVASWVAIYFVA) traverse the membrane as a helical segment.

The protein belongs to the AIM36 family.

The protein localises to the mitochondrion membrane. The protein is Altered inheritance of mitochondria protein 36, mitochondrial (AIM36) of Candida albicans (strain SC5314 / ATCC MYA-2876) (Yeast).